A 358-amino-acid polypeptide reads, in one-letter code: Heme A synthase 1 (358 aa).

The next 5 membrane-spanning stretches (helical) occupy residues 11–31, 98–117, 123–143, 159–179, and 199–219; these read LVGT…VGGG, WGRL…RLRG, LTAW…MGWY, LYLG…LWTA, and LLSV…LVAA. Position 262 (His262) interacts with heme. A run of 3 helical transmembrane segments spans residues 264-284, 292-312, and 315-335; these read VAAT…LRAP, LFLL…STLV, and MAEL…ACIA. Residue His322 participates in heme binding.

This sequence belongs to the COX15/CtaA family. Type 2 subfamily. As to quaternary structure, interacts with CtaB. The cofactor is heme b.

Its subcellular location is the cell membrane. The enzyme catalyses Fe(II)-heme o + 2 A + H2O = Fe(II)-heme a + 2 AH2. The protein operates within porphyrin-containing compound metabolism; heme A biosynthesis; heme A from heme O: step 1/1. In terms of biological role, catalyzes the conversion of heme O to heme A by two successive hydroxylations of the methyl group at C8. The first hydroxylation forms heme I, the second hydroxylation results in an unstable dihydroxymethyl group, which spontaneously dehydrates, resulting in the formyl group of heme A. In Acidiphilium cryptum (strain JF-5), this protein is Heme A synthase 1.